The primary structure comprises 457 residues: 11S globulin seed storage protein Ana o 2.0101 (457 aa).

A signal peptide spans 1–14 (LSVCFLILFHGCLA). Residues 15-29 (SRQEWQQQDECQIDR) form an igE-binding region. 2 disulfides stabilise this stretch: cysteine 25–cysteine 58 and cysteine 101–cysteine 278. 2 conformational epitope; mouse monoclonal antibody (mAb) 2B5-binding regions span residues 29-37 (RLDALEPDN) and 31-48 (DALEPDNRVEYEAGTVEA). One can recognise a Cupin type-1 1 domain in the interval 30 to 220 (LDALEPDNRV…AFQVDERLIK (191 aa)). 2 binds goat polyclonal antibodies (pAbs) regions span residues 32 to 45 (ALEPDNRVEYEAGT) and 55 to 86 (QFRCAGVALVRHTIQPNGLLLPQYSNAPQLIY). The mouse monoclonal antibody (mAb) 2B5-binding stretch occupies residues 34–57 (EPDNRVEYEAGTVEAWDPNHEQFR). The mouse monoclonal antibody (mAb) 4H9-binding stretch occupies residues 41 to 55 (YEAGTVEAWDPNHEQ). The interval 105–119 (YQAPQQGRQQGQSGR) is igE-binding. Residues 215-239 (DERLIKQLKSEDNRGGIVKVKDDEL) are binds goat polyclonal antibodies (pAbs). Residues 233 to 252 (KVKDDELRVIRPSRSQSERG) are CD4(+) T cell-reactive epitope. Residues 243–270 (RPSRSQSERGSESEEESEDEKRRWGQRD) are disordered. Residues 261 to 270 (DEKRRWGQRD) are compositionally biased toward basic and acidic residues. A linear epitope; mouse monoclonal antibody (mAb) 1F5-binding region spans residues 265–289 (RWGQRDNGIEETICTMRLKENINDP). An NGXEET; peptidase recognition motif motif is present at residues 271–276 (NGIEET). A Cupin type-1 2 domain is found at 284 to 433 (ENINDPARAD…AFQISREDAR (150 aa)). 5 CD4(+) T cell-reactive epitope regions span residues 289-308 (PARADIYTPEVGRLTTLNSL), 297-316 (PEVGRLTTLNSLNLPILKWL), 321-340 (EKGVLYKNALVLPHWNLNSH), 329-348 (ALVLPHWNLNSHSIIYGCKG), and 377-396 (QNFAVVKRAREERFEWISFK). Residues 395–416 (FKTNDRAMTSPLAGRTSVLGGM) form a binds goat polyclonal antibodies (pAbs), but buried in the 3D-structure model region.

The protein belongs to the 11S seed storage protein (globulins) family. Homotrimer. Hexamer. Each subunit is composed of an acidic and a basic chain derived from a single precursor and linked by a disulfide bond. Proteolytically processed from a single precursor to produce an acidic and a basic chain that are linked by a disulfide bond. Not glycosylated. As to expression, expressed in seed (at protein level). Expressed in the juice of the cashew apple (at protein level).

Seed storage protein. The protein is 11S globulin seed storage protein Ana o 2.0101 of Anacardium occidentale (Cashew).